The following is a 245-amino-acid chain: UPF0280 protein UNCMA_16740 (245 aa).

It belongs to the UPF0280 family.

This is UPF0280 protein UNCMA_16740 from Methanocella arvoryzae (strain DSM 22066 / NBRC 105507 / MRE50).